A 265-amino-acid polypeptide reads, in one-letter code: MSIRVAIAGARGKMGAEAVHTVMKHDKMELVAVLDYKEVGKTLADLDMFPASYTVPIFTEMHDLVEATSPDVLVDLTNPHSVYNHTKEALNLNVRPVIGTTGFTDAQLEELSTIAKEKELGCIIAPNFAIGAILMMKFAKEAAKYLPDVEIIEMHHDHKLDAPSGTAVKTAQLIQEARTQKTQGHPEEKETIEGARGGDFDGMRIHSVRLPGLVAHQQVLFGGDGQLLTIRHDSLNRNSFMSGIAFCVEEVMKMDQLVYGLENII.

Position 9–14 (9–14) interacts with NAD(+); it reads GARGKM. Residue Lys-37 coordinates NADP(+). NAD(+) is bound by residues 99–101 and 125–128; these read GTT and APNF. Residue His-155 is the Proton donor/acceptor of the active site. His-156 contributes to the (S)-2,3,4,5-tetrahydrodipicolinate binding site. Catalysis depends on Lys-159, which acts as the Proton donor. 165–166 serves as a coordination point for (S)-2,3,4,5-tetrahydrodipicolinate; it reads GT.

Belongs to the DapB family.

Its subcellular location is the cytoplasm. The enzyme catalyses (S)-2,3,4,5-tetrahydrodipicolinate + NAD(+) + H2O = (2S,4S)-4-hydroxy-2,3,4,5-tetrahydrodipicolinate + NADH + H(+). The catalysed reaction is (S)-2,3,4,5-tetrahydrodipicolinate + NADP(+) + H2O = (2S,4S)-4-hydroxy-2,3,4,5-tetrahydrodipicolinate + NADPH + H(+). It functions in the pathway amino-acid biosynthesis; L-lysine biosynthesis via DAP pathway; (S)-tetrahydrodipicolinate from L-aspartate: step 4/4. Its function is as follows. Catalyzes the conversion of 4-hydroxy-tetrahydrodipicolinate (HTPA) to tetrahydrodipicolinate. This is 4-hydroxy-tetrahydrodipicolinate reductase from Lysinibacillus sphaericus (strain C3-41).